Consider the following 265-residue polypeptide: Auxin-responsive protein IAA22 (265 aa).

2 disordered regions span residues 54 to 88 and 172 to 199; these read LSTPKPADADDLMNKMKPCSDEGHGSRDAAQERRP and DGREAGSGRRPAAGVDQVSERPDVSPAM. Over residues 65-88 the composition is skewed to basic and acidic residues; that stretch reads LMNKMKPCSDEGHGSRDAAQERRP. A PB1 domain is found at 91-194; the sequence is TMFVKVNLEG…GVDQVSERPD (104 aa).

It belongs to the Aux/IAA family. Homodimers and heterodimers. As to expression, highly expressed in flowers. Expressed in roots and seedlings.

The protein localises to the nucleus. In terms of biological role, aux/IAA proteins are short-lived transcriptional factors that function as repressors of early auxin response genes at low auxin concentrations. This is Auxin-responsive protein IAA22 (IAA22) from Oryza sativa subsp. japonica (Rice).